We begin with the raw amino-acid sequence, 229 residues long: Ribulose-phosphate 3-epimerase (229 aa).

Residue serine 12 participates in substrate binding. Histidine 37, aspartate 39, and histidine 70 together coordinate a divalent metal cation. Aspartate 39 functions as the Proton acceptor in the catalytic mechanism. Substrate-binding positions include histidine 70, 146–149 (GFTG), 181–183 (DGG), and 203–204 (AS). Position 181 (aspartate 181) interacts with a divalent metal cation. Catalysis depends on aspartate 181, which acts as the Proton donor.

This sequence belongs to the ribulose-phosphate 3-epimerase family. It depends on a divalent metal cation as a cofactor.

The enzyme catalyses D-ribulose 5-phosphate = D-xylulose 5-phosphate. The protein operates within carbohydrate degradation. In terms of biological role, catalyzes the reversible epimerization of D-ribulose 5-phosphate to D-xylulose 5-phosphate. In Chlamydia pneumoniae (Chlamydophila pneumoniae), this protein is Ribulose-phosphate 3-epimerase.